Reading from the N-terminus, the 474-residue chain is Probable threonine--tRNA ligase, mitochondrial (474 aa).

A mitochondrion-targeting transit peptide spans M1 to F27.

The protein belongs to the class-II aminoacyl-tRNA synthetase family.

The protein localises to the mitochondrion matrix. It catalyses the reaction tRNA(Thr) + L-threonine + ATP = L-threonyl-tRNA(Thr) + AMP + diphosphate + H(+). The protein is Probable threonine--tRNA ligase, mitochondrial of Schizosaccharomyces pombe (strain 972 / ATCC 24843) (Fission yeast).